Here is a 634-residue protein sequence, read N- to C-terminus: Chaperone protein HtpG (634 aa).

Residues 1 to 342 form an a; substrate-binding region; sequence MTVDTDKQTL…SSDLSLNVSR (342 aa). The interval 343-559 is b; it reads EILQSGPVVD…QGDLGLQMRQ (217 aa). Residues 560–634 are c; sequence LLEASGQAVP…LNKLLLELSV (75 aa).

It belongs to the heat shock protein 90 family. Homodimer.

The protein localises to the cytoplasm. Its function is as follows. Molecular chaperone. Has ATPase activity. The protein is Chaperone protein HtpG of Xanthomonas oryzae pv. oryzae (strain MAFF 311018).